The primary structure comprises 258 residues: Global transcriptional regulator CodY (258 aa).

Residues 1–156 are GAF domain; it reads MSSLLDKTRM…SATIIGLEIL (156 aa). A DNA-binding region (H-T-H motif) is located at residues 204–223; it reads ASKIADKVGITRSVIVNALR.

Belongs to the CodY family.

It localises to the cytoplasm. Functionally, DNA-binding global transcriptional regulator which is involved in the adaptive response to starvation and acts by directly or indirectly controlling the expression of numerous genes in response to nutrient availability. During rapid exponential growth, CodY is highly active and represses genes whose products allow adaptation to nutrient depletion. The sequence is that of Global transcriptional regulator CodY from Clostridium botulinum (strain ATCC 19397 / Type A).